Here is a 326-residue protein sequence, read N- to C-terminus: Nuclear egress protein 1 (326 aa).

Residues 115–244 (CLSLSGMGYY…YAVFPTKSVH (130 aa)) form a CCCH-type zinc finger.

Belongs to the herpesviridae NEC1 protein family. Forms a heterohexameric complex with NEC2. Interacts with capsid vertex specific component 2/CVC2; this interaction directs the capsid to the host inner nuclear membrane to initiate budding. Post-translationally, phosphorylated at serine residues in the N-terminus. This phosphorylation regulates the localization within the inner nuclear membrane.

It is found in the host nucleus inner membrane. Functionally, plays an essential role in virion nuclear egress, the first step of virion release from infected cell. Within the host nucleus, NEC1 interacts with the newly formed capsid through the vertexes and directs it to the inner nuclear membrane by associating with NEC2. Induces the budding of the capsid at the inner nuclear membrane as well as its envelopment into the perinuclear space. There, the NEC1/NEC2 complex promotes the fusion of the enveloped capsid with the outer nuclear membrane and the subsequent release of the viral capsid into the cytoplasm where it will reach the secondary budding sites in the host Golgi or trans-Golgi network. This is Nuclear egress protein 1 from Equine herpesvirus 1 (strain Ab4p) (EHV-1).